A 66-amino-acid polypeptide reads, in one-letter code: Large ribosomal subunit protein bL33c (66 aa).

This sequence belongs to the bacterial ribosomal protein bL33 family.

It localises to the plastid. It is found in the chloroplast. The sequence is that of Large ribosomal subunit protein bL33c from Lepidium virginicum (Virginia pepperweed).